The primary structure comprises 1099 residues: Sterol regulatory element-binding protein 2 (1099 aa).

Residues 1 to 47 (MDASEFMDTMDPSLSELGDEFTLGDIDEMLQFVSNQVDFPDIFEDQM) are transcriptional activation (acidic). Residues 1–461 (MDASEFMDTM…SCVGVMDRSR (461 aa)) are Cytoplasmic-facing. The disordered stretch occupies residues 65 to 107 (LTPPHTPVQTSSQTHTQTLTQAHTQTHTQTHTQTRTPPVLQPR). A compositionally biased stretch (low complexity) spans 71 to 100 (PVQTSSQTHTQTLTQAHTQTHTQTHTQTRT). The bHLH domain maps to 320–370 (ERRTTHNIIEKRYRSSINDKILELRDLVLGNDAKMHKSGVLRKAIDYIKYL). The interval 370–391 (LQQVNHKLRQENLTLKMANQKN) is leucine-zipper. A helical transmembrane segment spans residues 462–482 (LLLCALSFLCLSLNPLPSLLG). Topologically, residues 483-513 (AEAPAGSPEVAGHGPTRTLFSLPAQTQSFGA) are lumenal. Residues 514–534 (WLWCVLPFLLVWVVSGVGVVW) traverse the membrane as a helical segment. Over 535 to 1099 (GCVRVLYLWE…LSGGTTIAAS (565 aa)) the chain is Cytoplasmic.

This sequence belongs to the SREBP family. Forms a tight complex with scap, the SCAP-SREBP complex, in the endoplasmic reticulum membrane. As to quaternary structure, homodimer; efficient DNA binding of the soluble transcription factor fragment requires dimerization with another bHLH protein. In terms of processing, processed in the Golgi apparatus, releasing the protein from the membrane. At low cholesterol the SCAP-SREBP complex is recruited into COPII vesicles for export from the endoplasmic reticulum. In the Golgi, complex SREBPs are cleaved sequentially by site-1 (mbtps1, S1P) and site-2 (mbtps2, S2P) protease. The first cleavage by site-1 protease occurs within the luminal loop, the second cleavage by site-2 protease occurs within the first transmembrane domain, releasing the transcription factor from the Golgi membrane.

It is found in the endoplasmic reticulum membrane. The protein resides in the golgi apparatus membrane. The protein localises to the cytoplasmic vesicle. It localises to the COPII-coated vesicle membrane. Its subcellular location is the nucleus. Its function is as follows. Precursor of the transcription factor form (Processed sterol regulatory element-binding protein 2), which is embedded in the endoplasmic reticulum membrane. Low sterol concentrations promote processing of this form, releasing the transcription factor form that translocates into the nucleus and activates transcription of genes involved in cholesterol biosynthesis. Key transcription factor that regulates expression of genes involved in cholesterol biosynthesis. Binds to the sterol regulatory element 1 (SRE-1) (5'-ATCACCCCAC-3'). Has dual sequence specificity binding to both an E-box motif (5'-ATCACGTGA-3') and to SRE-1 (5'-ATCACCCCAC-3'). Regulates transcription of genes related to cholesterol synthesis pathway. Activated by mediated cholesterol efflux, transactivates NOTCH and promotes hematopoietic stem and progenitor cell emergence. In Danio rerio (Zebrafish), this protein is Sterol regulatory element-binding protein 2.